The chain runs to 363 residues: Protein EXORDIUM-like 5 (363 aa).

An N-terminal signal peptide occupies residues 1-25; that stretch reads MSSPATTITFFFFFTLSSFFYITSS. N-linked (GlcNAc...) asparagine glycosylation occurs at Asn-144.

It belongs to the EXORDIUM family.

It is found in the secreted. The protein localises to the extracellular space. Its subcellular location is the apoplast. Its function is as follows. May play a role in a brassinosteroid-dependent regulation of growth and development. The polypeptide is Protein EXORDIUM-like 5 (EXL5) (Arabidopsis thaliana (Mouse-ear cress)).